Here is a 203-residue protein sequence, read N- to C-terminus: Small ribosomal subunit protein uS4 (203 aa).

The S4 RNA-binding domain occupies 93–154 (RRFDNVVFRA…KSKNMDAVTE (62 aa)).

The protein belongs to the universal ribosomal protein uS4 family. As to quaternary structure, part of the 30S ribosomal subunit. Contacts protein S5. The interaction surface between S4 and S5 is involved in control of translational fidelity.

One of the primary rRNA binding proteins, it binds directly to 16S rRNA where it nucleates assembly of the body of the 30S subunit. Functionally, with S5 and S12 plays an important role in translational accuracy. The chain is Small ribosomal subunit protein uS4 from Prosthecochloris aestuarii (strain DSM 271 / SK 413).